Reading from the N-terminus, the 394-residue chain is Phosphoglycerate kinase (394 aa).

Residues 21 to 23 (DFN), R37, 60 to 63 (HLGR), R119, and R152 each bind substrate. Residues K202, E324, and 350-353 (GGDS) contribute to the ATP site.

It belongs to the phosphoglycerate kinase family. Monomer.

Its subcellular location is the cytoplasm. It catalyses the reaction (2R)-3-phosphoglycerate + ATP = (2R)-3-phospho-glyceroyl phosphate + ADP. It functions in the pathway carbohydrate degradation; glycolysis; pyruvate from D-glyceraldehyde 3-phosphate: step 2/5. The chain is Phosphoglycerate kinase from Herpetosiphon aurantiacus (strain ATCC 23779 / DSM 785 / 114-95).